The following is a 639-amino-acid chain: Chaperone protein DnaK (639 aa).

The residue at position 198 (threonine 198) is a Phosphothreonine; by autocatalysis. Residues 603–618 (AKAQTQGGAQEGAAKQ) show a composition bias toward low complexity. Positions 603–639 (AKAQTQGGAQEGAAKQSNATADDVVDAEFEEVKDDKK) are disordered. Residues 625–639 (DVVDAEFEEVKDDKK) show a composition bias toward acidic residues.

This sequence belongs to the heat shock protein 70 family.

Acts as a chaperone. In Shewanella sp. (strain MR-4), this protein is Chaperone protein DnaK.